Consider the following 204-residue polypeptide: Lipid A acyltransferase PagP (204 aa).

A signal peptide spans Met1–Ala25. Residues His76, Asp119, and Ser120 contribute to the active site.

This sequence belongs to the lipid A palmitoyltransferase family. As to quaternary structure, homodimer.

The protein resides in the cell outer membrane. The catalysed reaction is a lipid A + a 1,2-diacyl-sn-glycero-3-phosphocholine = a hepta-acyl lipid A + a 2-acyl-sn-glycero-3-phosphocholine. It catalyses the reaction a lipid IVA + a 1,2-diacyl-sn-glycero-3-phosphocholine = a lipid IVB + a 2-acyl-sn-glycero-3-phosphocholine. The enzyme catalyses a lipid IIA + a 1,2-diacyl-sn-glycero-3-phosphocholine = a lipid IIB + a 2-acyl-sn-glycero-3-phosphocholine. Transfers a fatty acid residue from the sn-1 position of a phospholipid to the N-linked hydroxyfatty acid chain on the proximal unit of lipid A or its precursors. This is Lipid A acyltransferase PagP from Yersinia enterocolitica serotype O:8 / biotype 1B (strain NCTC 13174 / 8081).